A 101-amino-acid chain; its full sequence is Small ribosomal subunit protein uS14 (101 aa).

It belongs to the universal ribosomal protein uS14 family. In terms of assembly, part of the 30S ribosomal subunit. Contacts proteins S3 and S10.

Its function is as follows. Binds 16S rRNA, required for the assembly of 30S particles and may also be responsible for determining the conformation of the 16S rRNA at the A site. The chain is Small ribosomal subunit protein uS14 from Shewanella sp. (strain ANA-3).